A 208-amino-acid chain; its full sequence is N-(5'-phosphoribosyl)anthranilate isomerase (208 aa).

It belongs to the TrpF family.

The enzyme catalyses N-(5-phospho-beta-D-ribosyl)anthranilate = 1-(2-carboxyphenylamino)-1-deoxy-D-ribulose 5-phosphate. Its pathway is amino-acid biosynthesis; L-tryptophan biosynthesis; L-tryptophan from chorismate: step 3/5. The polypeptide is N-(5'-phosphoribosyl)anthranilate isomerase (Lactiplantibacillus plantarum (strain ATCC BAA-793 / NCIMB 8826 / WCFS1) (Lactobacillus plantarum)).